Reading from the N-terminus, the 336-residue chain is DNA-directed RNA polymerase subunit alpha (336 aa).

The alpha N-terminal domain (alpha-NTD) stretch occupies residues 1–238 (MNDLDLNLVP…NLFLPFLQAE (238 aa)). The segment at 267–336 (AKKVTFQHIF…LQKRFGMRLQ (70 aa)) is alpha C-terminal domain (alpha-CTD).

This sequence belongs to the RNA polymerase alpha chain family. In plastids the minimal PEP RNA polymerase catalytic core is composed of four subunits: alpha, beta, beta', and beta''. When a (nuclear-encoded) sigma factor is associated with the core the holoenzyme is formed, which can initiate transcription.

The protein resides in the plastid. Its subcellular location is the chloroplast. The enzyme catalyses RNA(n) + a ribonucleoside 5'-triphosphate = RNA(n+1) + diphosphate. Functionally, DNA-dependent RNA polymerase catalyzes the transcription of DNA into RNA using the four ribonucleoside triphosphates as substrates. In Huperzia lucidula (Shining clubmoss), this protein is DNA-directed RNA polymerase subunit alpha.